We begin with the raw amino-acid sequence, 538 residues long: CTP synthase (538 aa).

Residues 1–267 (MDRAKFIFVT…LTPIARRFNL (267 aa)) form an amidoligase domain region. Serine 15 lines the CTP pocket. Residue serine 15 participates in UTP binding. Residues 16–21 (SLGKGI) and aspartate 73 contribute to the ATP site. Mg(2+)-binding residues include aspartate 73 and glutamate 141. CTP contacts are provided by residues 148 to 150 (DME), 188 to 193 (KTKPTQ), and lysine 224. Residues 188 to 193 (KTKPTQ) and lysine 224 each bind UTP. Residues 292 to 538 (KIGFVGKYLS…DFIKSALSKS (247 aa)) enclose the Glutamine amidotransferase type-1 domain. Position 351 (glycine 351) interacts with L-glutamine. Cysteine 378 serves as the catalytic Nucleophile; for glutamine hydrolysis. Residues 379-382 (LGMQ), glutamate 402, and arginine 469 each bind L-glutamine. Residues histidine 513 and glutamate 515 contribute to the active site.

It belongs to the CTP synthase family. In terms of assembly, homotetramer.

The catalysed reaction is UTP + L-glutamine + ATP + H2O = CTP + L-glutamate + ADP + phosphate + 2 H(+). The enzyme catalyses L-glutamine + H2O = L-glutamate + NH4(+). It carries out the reaction UTP + NH4(+) + ATP = CTP + ADP + phosphate + 2 H(+). Its pathway is pyrimidine metabolism; CTP biosynthesis via de novo pathway; CTP from UDP: step 2/2. Allosterically activated by GTP, when glutamine is the substrate; GTP has no effect on the reaction when ammonia is the substrate. The allosteric effector GTP functions by stabilizing the protein conformation that binds the tetrahedral intermediate(s) formed during glutamine hydrolysis. Inhibited by the product CTP, via allosteric rather than competitive inhibition. Catalyzes the ATP-dependent amination of UTP to CTP with either L-glutamine or ammonia as the source of nitrogen. Regulates intracellular CTP levels through interactions with the four ribonucleotide triphosphates. The polypeptide is CTP synthase (Helicobacter pylori (strain HPAG1)).